We begin with the raw amino-acid sequence, 722 residues long: Solute carrier organic anion transporter family member 4A1 (722 aa).

Residues 1–52 are disordered; that stretch reads MPLHQLGDKPLTFPSPNSAMENGLDHTPPSRRASPGTPLSPGSLRSAAHSPL. Residues 1–103 lie on the Cytoplasmic side of the membrane; the sequence is MPLHQLGDKP…PCLQVLNTPK (103 aa). Position 34 is a phosphoserine (Ser34). At Thr37 the chain carries Phosphothreonine. Phosphoserine occurs at positions 40, 43, 46, and 50. A helical transmembrane segment spans residues 104 to 124; that stretch reads GILFFLCAAAFLQGMTVNGFI. The Extracellular portion of the chain corresponds to 125-143; it reads NTVITSLERRYDLHSYQSG. The chain crosses the membrane as a helical span at residues 144-164; the sequence is LIASSYDIAACLCLTFVSYFG. The Cytoplasmic portion of the chain corresponds to 165-170; the sequence is GSGHKP. The chain crosses the membrane as a helical span at residues 171 to 195; that stretch reads RWLGWGVLLMGTGSLVFALPHFTAG. Topologically, residues 196 to 222 are extracellular; sequence RYEVELDAGVRTCPANPGAVCADSTSG. The chain crosses the membrane as a helical span at residues 223–253; the sequence is LSRYQLVFMLGQFLHGVGATPLYTLGVTYLD. The Cytoplasmic portion of the chain corresponds to 254 to 272; sequence ENVKSSCSPVYIAIFYTAA. The chain crosses the membrane as a helical span at residues 273–293; the sequence is ILGPAAGYLIGGALLNIYTEM. The Extracellular portion of the chain corresponds to 294-307; that stretch reads GRRTELTTESPLWV. The chain crosses the membrane as a helical span at residues 308–332; the sequence is GAWWVGFLGSGAAAFFTAVPILGYP. Over 333 to 378 the chain is Cytoplasmic; the sequence is RQLPGSQRYAVMRAAEMHQLKDSSRGEASNPDFGKTIRDLPLSIWL. Residues 379–400 form a helical membrane-spanning segment; sequence LLKNPTFILLCLAGATEATLIT. Topologically, residues 401 to 420 are extracellular; it reads GMSTFSPKFLESQFSLSASE. The helical transmembrane segment at 421–444 threads the bilayer; that stretch reads AATLFGYLVVPAGGGGTFLGGFFV. The Cytoplasmic segment spans residues 445–448; that stretch reads NKLR. A helical transmembrane segment spans residues 449 to 471; that stretch reads LRGSAVIKFCLFCTVVSLLGILV. The Extracellular segment spans residues 472–580; that stretch reads FSLHCPSVPM…TSTCQRKPLL (109 aa). Positions 498–555 constitute a Kazal-like domain; sequence LNLTAPCNAACSCQPEHYSPVCGSDGLMYFSLCHAGCPAATETNVDGQKVYRDCSCIP. Residue Asn499 is glycosylated (N-linked (GlcNAc...) asparagine). Cystine bridges form between Cys504–Cys534, Cys510–Cys530, and Cys519–Cys553. N-linked (GlcNAc...) asparagine glycosylation is present at Asn557. A helical transmembrane segment spans residues 581 to 603; it reads LVFIFVVIFFTFLSSIPALTATL. Topologically, residues 604–612 are cytoplasmic; it reads RCVRDPQRS. Residues 613-638 form a helical membrane-spanning segment; it reads FALGIQWIVVRILGGIPGPIAFGWVI. The Extracellular portion of the chain corresponds to 639–671; that stretch reads DKACLLWQDQCGQQGSCLVYQNSAMSRYILIMG. The helical transmembrane segment at 672-689 threads the bilayer; that stretch reads LLYKVLGVLFFAIACFLY. Topologically, residues 690–722 are cytoplasmic; sequence KPLSESSDGLETCLPSQSSAPDSATDSQLQSSV. A disordered region spans residues 703–722; sequence LPSQSSAPDSATDSQLQSSV.

The protein belongs to the organo anion transporter (TC 2.A.60) family. Widely expressed. Expressed in placental trophoblasts. Expressed in pancreas, kidney, skeletal muscle, liver, lung, brain, heart, colon, small intestine, ovary, testis, prostate, thymus and spleen. In testis, primarily localized to Leydig cells.

The protein resides in the cell membrane. It carries out the reaction 3,3',5-triiodo-L-thyronine(out) + L-glutamate(in) = 3,3',5-triiodo-L-thyronine(in) + L-glutamate(out). The catalysed reaction is L-thyroxine(out) + L-glutamate(in) = L-thyroxine(in) + L-glutamate(out). The enzyme catalyses estrone 3-sulfate(out) + L-glutamate(in) = estrone 3-sulfate(in) + L-glutamate(out). It catalyses the reaction taurocholate(out) + L-glutamate(in) = taurocholate(in) + L-glutamate(out). It carries out the reaction 3,3',5-triiodo-L-thyronine(out) = 3,3',5-triiodo-L-thyronine(in). The catalysed reaction is L-thyroxine(out) = L-thyroxine(in). The enzyme catalyses 3,3',5'-triiodo-L-thyronine(out) = 3,3',5'-triiodo-L-thyronine(in). It catalyses the reaction estrone 3-sulfate(out) = estrone 3-sulfate(in). It carries out the reaction 17beta-estradiol 17-O-(beta-D-glucuronate)(out) = 17beta-estradiol 17-O-(beta-D-glucuronate)(in). The catalysed reaction is taurocholate(out) = taurocholate(in). The enzyme catalyses prostaglandin E2(out) = prostaglandin E2(in). Organic anion antiporter with apparent broad substrate specificity. Recognizes various substrates including thyroid hormones 3,3',5-triiodo-L-thyronine (T3), L-thyroxine (T4) and 3,3',5'-triiodo-L-thyronine (rT3), conjugated steroids such as estrone 3-sulfate and estradiol 17-beta glucuronide, bile acids such as taurocholate and prostanoids such as prostaglandin E2, likely operating in a tissue-specific manner. May be involved in uptake of metabolites from the circulation into organs such as kidney, liver or placenta. Possibly drives the selective transport of thyroid hormones and estrogens coupled to an outward glutamate gradient across the microvillous membrane of the placenta. The transport mechanism, its electrogenicity and potential tissue-specific counterions remain to be elucidated. The protein is Solute carrier organic anion transporter family member 4A1 (SLCO4A1) of Homo sapiens (Human).